A 330-amino-acid chain; its full sequence is Probable deoxyhypusine synthase (330 aa).

The interval 1 to 25 (MTGDDADETHENVVPGSDEDLDTPD) is disordered. The active-site Nucleophile is the Lys298.

The protein belongs to the deoxyhypusine synthase family. The cofactor is NAD(+).

The catalysed reaction is [eIF5A protein]-L-lysine + spermidine = [eIF5A protein]-deoxyhypusine + propane-1,3-diamine. It participates in protein modification; eIF5A hypusination. Its function is as follows. Catalyzes the NAD-dependent oxidative cleavage of spermidine and the subsequent transfer of the butylamine moiety of spermidine to the epsilon-amino group of a specific lysine residue of the eIF-5A precursor protein to form the intermediate deoxyhypusine residue. The chain is Probable deoxyhypusine synthase from Halobacterium salinarum (strain ATCC 29341 / DSM 671 / R1).